The chain runs to 266 residues: Glioma pathogenesis-related protein 1 (266 aa).

The signal sequence occupies residues methionine 1–threonine 21. Positions valine 38–tyrosine 175 constitute an SCP domain. Residues tyrosine 233–valine 255 form a helical membrane-spanning segment.

The protein belongs to the CRISP family. According to PubMed:8973356, it is ubiquitously expressed with high levels in lung and kidney and low levels in heart and liver. Highly expressed in cell lines derived from nervous system tumors arising from glia, low or absent in non-glial-derived nervous system tumor cell lines. Also found in fetal kidney. According to PubMed:7607567 it is expressed only in brain tumor glioblastoma multiforme/astrocytoma and not in other nervous system tumors or normal fetal or adult tissues.

The protein resides in the membrane. The sequence is that of Glioma pathogenesis-related protein 1 (GLIPR1) from Homo sapiens (Human).